Consider the following 119-residue polypeptide: Putative F420H(2)-dependent quinone reductase Rv3178 (119 aa).

Residues 21–23 (RKS), 27–32 (FVAPLL), 43–46 (VASA), and 54–58 (QWYRN) contribute to the coenzyme F420-(gamma-Glu)n site.

The protein belongs to the F420H(2)-dependent quinone reductase family.

It localises to the cell membrane. It carries out the reaction oxidized coenzyme F420-(gamma-L-Glu)(n) + a quinol + H(+) = reduced coenzyme F420-(gamma-L-Glu)(n) + a quinone. Its function is as follows. Involved in a F420-dependent anti-oxidant mechanism that protects M.tuberculosis against oxidative stress and bactericidal agents. Catalyzes the F420H(2)-dependent two-electron reduction of quinones to dihydroquinones, thereby preventing the formation of cytotoxic semiquinones obtained by the one-electron reduction pathway. Since menaquinone is the sole quinone electron carrier in the respiratory chain in M.tuberculosis, the physiological electron acceptor for Fqr-mediated F420H(2) oxidation is therefore likely to be the endogenous menaquinone found in the membrane fraction of M.tuberculosis. This is Putative F420H(2)-dependent quinone reductase Rv3178 from Mycobacterium tuberculosis (strain ATCC 25618 / H37Rv).